A 536-amino-acid chain; its full sequence is Major facilitator superfamily domain-containing protein 4B (536 aa).

12 helical membrane passes run 19-39 (LTYW…GPTI), 53-73 (ITWV…SGGA), 81-101 (ALLA…IIPL), 105-125 (VLLL…IDTI), 140-160 (IFLQ…PLIA), 211-231 (YAFW…FVLM), 297-317 (FFLI…IMGV), 341-361 (LNCI…PLSY), 366-386 (VHLL…LMIL), 391-411 (VFLF…FPCL), 428-448 (VLVT…GTLI), and 456-476 (FLVC…SVIL).

Belongs to the major facilitator superfamily.

It localises to the membrane. In Danio rerio (Zebrafish), this protein is Major facilitator superfamily domain-containing protein 4B.